The sequence spans 170 residues: CASP-like protein 1F1 (170 aa).

Over 1-16 the chain is Cytoplasmic; sequence MMGDNEGRRTPLLNLG. The chain crosses the membrane as a helical span at residues 17–37; sequence VQVSMRVLTIGAAMASMWVMI. Residues 38 to 62 are Extracellular-facing; it reads TNREVASVYGIAFEAKYSYSSAFRY. Residues 63-83 form a helical membrane-spanning segment; that stretch reads LVYAQIAVCAATLFTLVWACL. Residues 84–88 lie on the Cytoplasmic side of the membrane; it reads AVRRR. A helical membrane pass occupies residues 89-109; it reads GLVFALFFFDLLTTLTAISAF. Residues 110 to 141 lie on the Extracellular side of the membrane; it reads SAAFAEGYVGKYGNKQAGWLPICGYVHGYCSR. A helical transmembrane segment spans residues 142–162; the sequence is VTISLAMSFASFILLFILTVL. Over 163–170 the chain is Cytoplasmic; sequence TASAARHY.

The protein belongs to the Casparian strip membrane proteins (CASP) family. In terms of assembly, homodimer and heterodimers. As to expression, in flowers, expressed in the anther wall.

It is found in the cell membrane. In Arabidopsis thaliana (Mouse-ear cress), this protein is CASP-like protein 1F1.